A 470-amino-acid polypeptide reads, in one-letter code: MKIAITRGLDLSLQGSPKESGFLKRIDPALVSVDLRPYSALALKLKVEQDDVISSGSPIAEYKNFPGVFITSPVSGIVKEIRRGEKRSLLDVVIKKTPGQNLTEYSYDLSKLSRAELLEIFKKEGLFALFKQRPFDIPALPTQTPRDVFINLADNRPFTPSTEKQLAVFSSREEGFYVFNVGVRAVAKLFGLCPHIVSTDRLALPEKDLKSIAHLHKITGPYPSGSPSTHIHYIAPITNEKDIVFTLSFQEVLTIGHLFLKGRILNEQVVALAGSGLKSSLRRYVITTKGANFESLLPLQDISSDVSLISGDPLTGRLCDRESLPCLGMRDSTISVLPNPKTRQAFNFLRLGINKPTHTRTYLSGFLKRKHTYMDPDTNLHGETRPIIDTEIYDKVMPLKIPVVPLIKAVITKDFELACMLGFLEVCPEDFALPTFIDPSKTEMLTIIKDALKDYAKETGILNLEYEDKE.

Belongs to the NqrA family. In terms of assembly, composed of six subunits; NqrA, NqrB, NqrC, NqrD, NqrE and NqrF.

The catalysed reaction is a ubiquinone + n Na(+)(in) + NADH + H(+) = a ubiquinol + n Na(+)(out) + NAD(+). Functionally, NQR complex catalyzes the reduction of ubiquinone-1 to ubiquinol by two successive reactions, coupled with the transport of Na(+) ions from the cytoplasm to the periplasm. NqrA to NqrE are probably involved in the second step, the conversion of ubisemiquinone to ubiquinol. This Chlamydia caviae (strain ATCC VR-813 / DSM 19441 / 03DC25 / GPIC) (Chlamydophila caviae) protein is Na(+)-translocating NADH-quinone reductase subunit A.